The primary structure comprises 519 residues: T-complex protein 11-like protein 2 (519 aa).

The disordered stretch occupies residues 1–30 (MPFNGEKQCVGEDQPSDSDSSRFSESMASL). Position 16 is a phosphoserine (Ser16). The segment covering 17-29 (DSDSSRFSESMAS) has biased composition (low complexity).

It belongs to the TCP11 family. In terms of assembly, interacts with FMNL2; this interaction promotes muscle-derived satellite cell (MDSC) migration and differentiation.

It is found in the cytoplasm. The protein resides in the cytoskeleton. In terms of biological role, promotes the migration of muscle-derived satellite cells (MDSCs) during differentiation throught interaction with FMNL2 and therefore may participate in microfilament assembly. The chain is T-complex protein 11-like protein 2 from Homo sapiens (Human).